The sequence spans 78 residues: Acyl carrier protein (78 aa).

Residues 2 to 77 (DNIVERVKKI…QAVDYILAGK (76 aa)) enclose the Carrier domain. O-(pantetheine 4'-phosphoryl)serine is present on S37.

This sequence belongs to the acyl carrier protein (ACP) family. 4'-phosphopantetheine is transferred from CoA to a specific serine of apo-ACP by AcpS. This modification is essential for activity because fatty acids are bound in thioester linkage to the sulfhydryl of the prosthetic group.

The protein resides in the cytoplasm. The protein operates within lipid metabolism; fatty acid biosynthesis. In terms of biological role, carrier of the growing fatty acid chain in fatty acid biosynthesis. In Dechloromonas aromatica (strain RCB), this protein is Acyl carrier protein.